The chain runs to 299 residues: MDFPQQLEACVKQANQALSRFIAPLPFQNTPVVETMQYGALLGGKRLRPFLVYATGHMFGVSTNTLDAPAAAVECIHAYSLIHDDLPAMDDDDLRRGLPTCHVKFGEANAILAGDALQTLAFSILSDADMPEVSDRDRISMISELASASGIAGMCGGQALDLDAEGKHVPLDALERIHRHKTGALIRAAVRLGALSAGDKGRRALPVLDKYAESIGLAFQVQDDILDVVGDTATLGKRQGADQQLGKSTYPALLGLEQARKKARDLIDDARQSLKQLAEQSLDTSALEALADYIIQRNK.

Lys45, Arg48, and His77 together coordinate isopentenyl diphosphate. 2 residues coordinate Mg(2+): Asp84 and Asp90. (2E)-geranyl diphosphate is bound at residue Arg95. Isopentenyl diphosphate is bound at residue Arg96. (2E)-geranyl diphosphate-binding residues include Lys181, Thr182, Gln220, and Lys237.

This sequence belongs to the FPP/GGPP synthase family. Mg(2+) is required as a cofactor.

It localises to the cytoplasm. It catalyses the reaction isopentenyl diphosphate + (2E)-geranyl diphosphate = (2E,6E)-farnesyl diphosphate + diphosphate. This Escherichia coli (strain K12) protein is Farnesyl diphosphate synthase (ispA).